We begin with the raw amino-acid sequence, 263 residues long: Phosphatidylglycerol--prolipoprotein diacylglyceryl transferase (263 aa).

3 helical membrane-spanning segments follow: residues 17–37 (LSVR…IFLG), 56–76 (LLFY…VLFY), and 88–108 (IFAV…VLVA). Residue Arg139 participates in a 1,2-diacyl-sn-glycero-3-phospho-(1'-sn-glycerol) binding. 2 helical membrane-spanning segments follow: residues 176-196 (QLYH…WFTA) and 236-256 (ISMG…MVVF).

Belongs to the Lgt family.

The protein localises to the cell inner membrane. It catalyses the reaction L-cysteinyl-[prolipoprotein] + a 1,2-diacyl-sn-glycero-3-phospho-(1'-sn-glycerol) = an S-1,2-diacyl-sn-glyceryl-L-cysteinyl-[prolipoprotein] + sn-glycerol 1-phosphate + H(+). It participates in protein modification; lipoprotein biosynthesis (diacylglyceryl transfer). Functionally, catalyzes the transfer of the diacylglyceryl group from phosphatidylglycerol to the sulfhydryl group of the N-terminal cysteine of a prolipoprotein, the first step in the formation of mature lipoproteins. The chain is Phosphatidylglycerol--prolipoprotein diacylglyceryl transferase from Dechloromonas aromatica (strain RCB).